The following is a 238-amino-acid chain: Probable transcriptional regulatory protein YeeN (238 aa).

Belongs to the TACO1 family. YeeN subfamily.

The protein resides in the cytoplasm. This is Probable transcriptional regulatory protein YeeN from Shigella flexneri.